The chain runs to 455 residues: Argininosuccinate lyase (455 aa).

The protein belongs to the lyase 1 family. Argininosuccinate lyase subfamily.

The protein resides in the cytoplasm. It carries out the reaction 2-(N(omega)-L-arginino)succinate = fumarate + L-arginine. It participates in amino-acid biosynthesis; L-arginine biosynthesis; L-arginine from L-ornithine and carbamoyl phosphate: step 3/3. The polypeptide is Argininosuccinate lyase (Caulobacter vibrioides (strain ATCC 19089 / CIP 103742 / CB 15) (Caulobacter crescentus)).